The primary structure comprises 195 residues: uncharacterized protein (195 aa).

This is an uncharacterized protein from Schizosaccharomyces pombe (strain 972 / ATCC 24843) (Fission yeast).